Here is a 484-residue protein sequence, read N- to C-terminus: UDP-N-acetylmuramoyl-L-alanyl-D-glutamate--2,6-diaminopimelate ligase (484 aa).

ATP is bound at residue 110–116 (GTNGKTT). Residues 152–153 (TT), Ser179, and Arg187 each bind UDP-N-acetyl-alpha-D-muramoyl-L-alanyl-D-glutamate. Lys219 carries the N6-carboxylysine modification. Residues Arg381, 405–408 (DNPR), Gly455, and Glu459 each bind meso-2,6-diaminopimelate. The Meso-diaminopimelate recognition motif motif lies at 405–408 (DNPR).

It belongs to the MurCDEF family. MurE subfamily. Mg(2+) is required as a cofactor. Post-translationally, carboxylation is probably crucial for Mg(2+) binding and, consequently, for the gamma-phosphate positioning of ATP.

It is found in the cytoplasm. The enzyme catalyses UDP-N-acetyl-alpha-D-muramoyl-L-alanyl-D-glutamate + meso-2,6-diaminopimelate + ATP = UDP-N-acetyl-alpha-D-muramoyl-L-alanyl-gamma-D-glutamyl-meso-2,6-diaminopimelate + ADP + phosphate + H(+). It participates in cell wall biogenesis; peptidoglycan biosynthesis. In terms of biological role, catalyzes the addition of meso-diaminopimelic acid to the nucleotide precursor UDP-N-acetylmuramoyl-L-alanyl-D-glutamate (UMAG) in the biosynthesis of bacterial cell-wall peptidoglycan. The protein is UDP-N-acetylmuramoyl-L-alanyl-D-glutamate--2,6-diaminopimelate ligase of Clostridium perfringens (strain 13 / Type A).